We begin with the raw amino-acid sequence, 63 residues long: Large ribosomal subunit protein bL28 (63 aa).

This sequence belongs to the bacterial ribosomal protein bL28 family.

This Thermomicrobium roseum (strain ATCC 27502 / DSM 5159 / P-2) protein is Large ribosomal subunit protein bL28.